Consider the following 130-residue polypeptide: Ribosome-binding factor A (130 aa).

Belongs to the RbfA family. In terms of assembly, monomer. Binds 30S ribosomal subunits, but not 50S ribosomal subunits or 70S ribosomes.

It is found in the cytoplasm. Functionally, one of several proteins that assist in the late maturation steps of the functional core of the 30S ribosomal subunit. Associates with free 30S ribosomal subunits (but not with 30S subunits that are part of 70S ribosomes or polysomes). Required for efficient processing of 16S rRNA. May interact with the 5'-terminal helix region of 16S rRNA. This chain is Ribosome-binding factor A, found in Prochlorococcus marinus (strain SARG / CCMP1375 / SS120).